Reading from the N-terminus, the 424-residue chain is uncharacterized protein (424 aa).

Lys-259 carries the post-translational modification N6-(pyridoxal phosphate)lysine.

The protein belongs to the class-III pyridoxal-phosphate-dependent aminotransferase family. Pyridoxal 5'-phosphate serves as cofactor.

This is an uncharacterized protein from Archaeoglobus fulgidus (strain ATCC 49558 / DSM 4304 / JCM 9628 / NBRC 100126 / VC-16).